The chain runs to 391 residues: Phosphoglycerate kinase (391 aa).

Substrate is bound by residues 21-23 (DLN), R36, 59-62 (HLGR), R113, and R146. Residues K197, E319, and 345-348 (GGDT) each bind ATP.

The protein belongs to the phosphoglycerate kinase family. In terms of assembly, monomer.

The protein resides in the cytoplasm. The catalysed reaction is (2R)-3-phosphoglycerate + ATP = (2R)-3-phospho-glyceroyl phosphate + ADP. The protein operates within carbohydrate degradation; glycolysis; pyruvate from D-glyceraldehyde 3-phosphate: step 2/5. The polypeptide is Phosphoglycerate kinase (Stenotrophomonas maltophilia (strain K279a)).